A 205-amino-acid polypeptide reads, in one-letter code: MIPLSHNNTPTELENYVKLKGQSLTIQDFSAHDFQGVKKIVRDRLHTLQGELCVYCEKKYSVDEMQVEHIKPKSGRNAQPNLCFTYSNYAVSCIQENRKTQTCGQKKKDNILFIEPTSPSCNSHFSLDTDGFINPRGFKNRKEKHSIQTTIDMLGLNKPHLQLERKKQIERLIYILKATKHNRHELTNKFIKSGNFKYILRELTM.

Its function is as follows. Putative HNH endonuclease component of antiviral defense system retron Vc95, composed of a non-coding RNA (ncRNA), a reverse transcriptase (RT), a probable ATP-binding protein and this protein. Expression of retron Vc95 confers protection against bacteriophages T2, T4 and T6. At multiplicity of infection (MOI) of 0.02 cultures slow growth when infected with T4 but do not collapse, at MOI 2 cultures enter growth stasis. This Vibrio cholerae serotype O1 biovar El Tor protein is Retron Vc95 putative HNH endonuclease.